A 700-amino-acid chain; its full sequence is Lutropin-choriogonadotropic hormone receptor (700 aa).

An N-terminal signal peptide occupies residues 1 to 26; the sequence is MGRRVPALRQLLVLAMLVLKQSQLHS. The Extracellular portion of the chain corresponds to 27 to 362; that stretch reads PELSGSRCPE…AFNPCEDIMG (336 aa). An LRR 1 repeat occupies 52–75; that stretch reads RAGLARLSLTYLPVKVIPSQAFRG. N103 is a glycosylation site (N-linked (GlcNAc...) asparagine). 3 LRR repeats span residues 126 to 150, 176 to 200, and 225 to 248; these read LPRL…KISS, MNNE…AFNG, and ATGP…GLES. N178 and N199 each carry an N-linked (GlcNAc...) asparagine glycan. N-linked (GlcNAc...) asparagine glycosylation is found at N295, N303, and N317. The residue at position 335 (Y335) is a Sulfotyrosine. The chain crosses the membrane as a helical span at residues 363-390; it reads YAFLRVLIWLINILAIFGNLTVLFVLLT. Over 391-399 the chain is Cytoplasmic; that stretch reads SRYKLTVPR. The chain crosses the membrane as a helical span at residues 400–422; sequence FLMCNLSFADFCMGLYLLLIASV. Topologically, residues 423 to 443 are extracellular; the sequence is DSQTKGQYYNHAIDWQTGSGC. Cysteines 443 and 518 form a disulfide. A helical transmembrane segment spans residues 444 to 466; that stretch reads SAAGFFTVFASELSVYTLTVITL. The Cytoplasmic segment spans residues 467 to 486; sequence ERWHTITYAVQLDQKLRLRH. Residues 487–509 traverse the membrane as a helical segment; that stretch reads AIPIMLGGWIFSTLMATLPLVGV. At 510–529 the chain is on the extracellular side; sequence SSYMKVSICLPMDVESTLSQ. The chain crosses the membrane as a helical span at residues 530–551; sequence VYILSILLLNAVAFVVICACYV. The Cytoplasmic portion of the chain corresponds to 552 to 574; that stretch reads RIYFAVQNPELTAPNKDTKIAKK. A helical transmembrane segment spans residues 575–598; it reads MAILIFTDFTCMAPISFFAISAAF. Over 599 to 609 the chain is Extracellular; the sequence is KVPLITVTNSK. A helical membrane pass occupies residues 610–631; sequence VLLVLFYPVNSCANPFLYAVFT. At 632–700 the chain is on the cytoplasmic side; it reads KAFQRDFFLL…QPTPPRVLIQ (69 aa). S-palmitoyl cysteine attachment occurs at residues C647 and C648.

Belongs to the G-protein coupled receptor 1 family. FSH/LSH/TSH subfamily. In terms of processing, sulfated.

The protein localises to the cell membrane. Functionally, receptor for lutropin-choriogonadotropic hormone. The activity of this receptor is mediated by G proteins which activate adenylate cyclase. This is Lutropin-choriogonadotropic hormone receptor (Lhcgr) from Mus musculus (Mouse).